We begin with the raw amino-acid sequence, 368 residues long: Major capsid protein (368 aa).

This sequence belongs to the lambda phage major capsid protein family. In terms of assembly, homomultimer.

The protein resides in the virion. It localises to the host cytoplasm. Functionally, assembles to form an icosahedral capsid. The assembly is primed by the interaction between capsid assembly protease and portal dodecamer, and major capsid proteins assemble cooperatively to form the procapsid with the help of capsid scaffolding protein. Major capsid protein forms hexons and pentons of the icosahedron. Viral genomic DNA is packaged into the procapsid through the portal vertex. The packaging triggers a dramatic reconfiguration of the capsid shell. In Salmonella (Bacteriophage Felix O1), this protein is Major capsid protein.